The chain runs to 274 residues: uncharacterized protein (274 aa).

The N-terminal stretch at 1–30 (MTVYTPTSERQAPATTHRQMWALGDYAAIA) is a signal peptide.

To M.tuberculosis Rv1405c.

This is an uncharacterized protein from Mycobacterium tuberculosis (strain CDC 1551 / Oshkosh).